Reading from the N-terminus, the 150-residue chain is Keratin-associated protein 15-1 (150 aa).

Belongs to the PMG family. As to quaternary structure, interacts with hair keratins. As to expression, expressed at high levels in skin and at lower levels in the developing mammary gland.

In the hair cortex, hair keratin intermediate filaments are embedded in an interfilamentous matrix, consisting of hair keratin-associated proteins (KRTAP), which are essential for the formation of a rigid and resistant hair shaft through their extensive disulfide bond cross-linking with abundant cysteine residues of hair keratins. The matrix proteins include the high-sulfur and high-glycine-tyrosine keratins. The chain is Keratin-associated protein 15-1 from Mus musculus (Mouse).